Reading from the N-terminus, the 154-residue chain is 17.8 kDa class I heat shock protein (154 aa).

A sHSP domain is found at 40–154 (ESSAFANTRI…PEVKSIEISG (115 aa)).

It belongs to the small heat shock protein (HSP20) family. In terms of assembly, forms oligomeric structures.

It localises to the cytoplasm. The chain is 17.8 kDa class I heat shock protein from Solanum lycopersicum (Tomato).